A 2157-amino-acid chain; its full sequence is Genome polyprotein (2157 aa).

Gly-2 is lipidated: N-myristoyl glycine; by host. Residues 2-1470 lie on the Cytoplasmic side of the membrane; sequence GAQVSRQNVG…DLSIANSIIT (1469 aa). The interval 567-584 is amphipathic alpha-helix; the sequence is PIEQNPVENYIDEVLNEV. Active-site for protease 2A activity residues include His-875 and Asp-892. Zn(2+) contacts are provided by Cys-909 and Cys-911. The active-site For protease 2A activity is the Cys-963. Cys-969 and His-971 together coordinate Zn(2+). Residues 1095 to 1164 form a membrane-binding region; the sequence is SDSWLKKFTE…NLRAADNATQ (70 aa). The tract at residues 1095–1228 is oligomerization; the sequence is SDSWLKKFTE…PPGTGKSITT (134 aa). The segment at 1116–1120 is RNA-binding; it reads GNKIS. In terms of domain architecture, SF3 helicase spans 1188–1350; it reads EAKRIKVLYN…YKDAQGKLNV (163 aa). Zn(2+) contacts are provided by Cys-1357, Cys-1368, and Cys-1373. A C4-type; degenerate zinc finger spans residues 1357–1373; sequence CNVNTKIGNAKCCPFVC. The segment at 1400 to 1407 is RNA-binding; that stretch reads EDKRRRQV. Residues 1411–1416 are oligomerization; that stretch reads MSAIFQ. The stretch at 1471 to 1486 is an intramembrane region; that stretch reads IIANIISIAGIIFVIY. The Cytoplasmic portion of the chain corresponds to 1487–2157; that stretch reads KLFCTLQGPY…LLKHEWYEKF (671 aa). At Tyr-1496 the chain carries O-(5'-phospho-RNA)-tyrosine. Residues 1515–1693 form the Peptidase C3 domain; sequence GPEEEFGRSI…FSAMLLRSYF (179 aa). Catalysis depends on for protease 3C activity residues His-1554, Glu-1585, and Cys-1661. A RdRp catalytic domain is found at 1925 to 2038; that stretch reads DCIMAFDYTN…SYKYTLDMEA (114 aa). 2 residues coordinate Mg(2+): Asp-1931 and Asp-2024.

The protein belongs to the picornaviruses polyprotein family. In terms of assembly, interacts with capsid protein VP1 and capsid protein VP3 to form heterotrimeric protomers. Interacts with capsid protein VP0, and capsid protein VP3 to form heterotrimeric protomers. Five protomers subsequently associate to form pentamers which serve as building blocks for the capsid. Interacts with capsid protein VP2, capsid protein VP3 and capsid protein VP4 following cleavage of capsid protein VP0. As to quaternary structure, interacts with capsid protein VP1 and capsid protein VP3 in the mature capsid. In terms of assembly, interacts with capsid protein VP0 and capsid protein VP1 to form heterotrimeric protomers. Five protomers subsequently associate to form pentamers which serve as building blocks for the capsid. Interacts with capsid protein VP4 in the mature capsid. Interacts with protein 2C; this interaction may be important for virion morphogenesis. Interacts with capsid protein VP1 and capsid protein VP3. As to quaternary structure, homodimer. In terms of assembly, homohexamer; forms a hexameric ring structure with 6-fold symmetry characteristic of AAA+ ATPases. Interacts (via N-terminus) with host RTN3 (via reticulon domain); this interaction is important for viral replication. Interacts with capsid protein VP3; this interaction may be important for virion morphogenesis. Interacts with protein 3CD. As to quaternary structure, homodimer. Interacts with host GBF1. Interacts (via GOLD domain) with host ACBD3 (via GOLD domain); this interaction allows the formation of a viral protein 3A/ACBD3 heterotetramer with a 2:2 stoichiometry, which will stimulate the recruitment of host PI4KB in order to synthesize PI4P at the viral RNA replication sites. In terms of assembly, interacts with RNA-directed RNA polymerase. Interacts with protein 3AB and with RNA-directed RNA polymerase. As to quaternary structure, interacts with Viral protein genome-linked and with protein 3CD. Mg(2+) serves as cofactor. Specific enzymatic cleavages in vivo by the viral proteases yield processing intermediates and the mature proteins. In terms of processing, myristoylation is required for the formation of pentamers during virus assembly. Further assembly of 12 pentamers and a molecule of genomic RNA generates the provirion. Post-translationally, during virion maturation, immature virions are rendered infectious following cleavage of VP0 into VP4 and VP2. This maturation seems to be an autocatalytic event triggered by the presence of RNA in the capsid and it is followed by a conformational change infectious virion. Myristoylation is required during RNA encapsidation and formation of the mature virus particle. In terms of processing, VPg is uridylylated by the polymerase into VPg-pUpU. This acts as a nucleotide-peptide primer for the genomic RNA replication.

The protein resides in the virion. The protein localises to the host cytoplasm. It is found in the host cytoplasmic vesicle membrane. Its subcellular location is the host nucleus. The catalysed reaction is a ribonucleoside 5'-triphosphate + H2O = a ribonucleoside 5'-diphosphate + phosphate + H(+). It catalyses the reaction Selective cleavage of Tyr-|-Gly bond in the picornavirus polyprotein.. It carries out the reaction RNA(n) + a ribonucleoside 5'-triphosphate = RNA(n+1) + diphosphate. The enzyme catalyses Selective cleavage of Gln-|-Gly bond in the poliovirus polyprotein. In other picornavirus reactions Glu may be substituted for Gln, and Ser or Thr for Gly.. Its activity is regulated as follows. Replication or transcription is subject to high level of random mutations by the nucleotide analog ribavirin. In terms of biological role, forms an icosahedral capsid of pseudo T=3 symmetry with capsid proteins VP2 and VP3. The capsid is 300 Angstroms in diameter, composed of 60 copies of each capsid protein and enclosing the viral positive strand RNA genome. Capsid protein VP1 mainly forms the vertices of the capsid. Capsid protein VP1 interacts with host cell receptor to provide virion attachment to target host cells. This attachment induces virion internalization. Tyrosine kinases are probably involved in the entry process. After binding to its receptor, the capsid undergoes conformational changes. Capsid protein VP1 N-terminus (that contains an amphipathic alpha-helix) and capsid protein VP4 are externalized. Together, they shape a pore in the host membrane through which viral genome is translocated to host cell cytoplasm. Forms an icosahedral capsid of pseudo T=3 symmetry with capsid proteins VP2 and VP3. The capsid is 300 Angstroms in diameter, composed of 60 copies of each capsid protein and enclosing the viral positive strand RNA genome. Functionally, lies on the inner surface of the capsid shell. After binding to the host receptor, the capsid undergoes conformational changes. Capsid protein VP4 is released, Capsid protein VP1 N-terminus is externalized, and together, they shape a pore in the host membrane through which the viral genome is translocated into the host cell cytoplasm. Its function is as follows. Component of immature procapsids, which is cleaved into capsid proteins VP4 and VP2 after maturation. Allows the capsid to remain inactive before the maturation step. In terms of biological role, cysteine protease that cleaves viral polyprotein and specific host proteins. It is responsible for the autocatalytic cleavage between the P1 and P2 regions, which is the first cleavage occurring in the polyprotein. Also cleaves the host translation initiation factor EIF4G1, in order to shut down the capped cellular mRNA translation. Inhibits the host nucleus-cytoplasm protein and RNA trafficking by cleaving host members of the nuclear pores. Counteracts stress granule formation probably by antagonizing its assembly or promoting its dissassembly. Plays an essential role in the virus replication cycle by acting as a viroporin. Creates a pore in the host endoplasmic reticulum and as a consequence releases Ca2+ in the cytoplasm of infected cell. In turn, high levels of cytoplasmic calcium may trigger membrane trafficking and transport of viral ER-associated proteins to viroplasms, sites of viral genome replication. Functionally, induces and associates with structural rearrangements of intracellular membranes. Displays RNA-binding, nucleotide binding and NTPase activities. May play a role in virion morphogenesis and viral RNA encapsidation by interacting with the capsid protein VP3. Its function is as follows. Localizes the viral replication complex to the surface of membranous vesicles. Together with protein 3CD binds the Cis-Active RNA Element (CRE) which is involved in RNA synthesis initiation. Acts as a cofactor to stimulate the activity of 3D polymerase, maybe through a nucleid acid chaperone activity. In terms of biological role, localizes the viral replication complex to the surface of membranous vesicles. It inhibits host cell endoplasmic reticulum-to-Golgi apparatus transport and causes the disassembly of the Golgi complex, possibly through GBF1 interaction. This would result in depletion of MHC, trail receptors and IFN receptors at the host cell surface. Plays an essential role in viral RNA replication by recruiting ACBD3 and PI4KB at the viral replication sites, thereby allowing the formation of the rearranged membranous structures where viral replication takes place. Acts as a primer for viral RNA replication and remains covalently bound to viral genomic RNA. VPg is uridylylated prior to priming replication into VPg-pUpU. The oriI viral genomic sequence may act as a template for this. The VPg-pUpU is then used as primer on the genomic RNA poly(A) by the RNA-dependent RNA polymerase to replicate the viral genome. During genome replication, the VPg-RNA linkage is removed by the host TDP2, thereby accelerating replication. During the late stage of the replication cycle, host TDP2 is excluded from sites of viral RNA synthesis and encapsidation, allowing for the generation of progeny virions. Functionally, involved in the viral replication complex and viral polypeptide maturation. It exhibits protease activity with a specificity and catalytic efficiency that is different from protease 3C. Protein 3CD lacks polymerase activity. Protein 3CD binds to the 5'UTR of the viral genome. Its function is as follows. Replicates the viral genomic RNA on the surface of intracellular membranes. May form linear arrays of subunits that propagate along a strong head-to-tail interaction called interface-I. Covalently attaches UMP to a tyrosine of VPg, which is used to prime RNA synthesis. The positive stranded RNA genome is first replicated at virus induced membranous vesicles, creating a dsRNA genomic replication form. This dsRNA is then used as template to synthesize positive stranded RNA genomes. ss(+)RNA genomes are either translated, replicated or encapsidated. In terms of biological role, major viral protease that mediates proteolytic processing of the polyprotein. Cleaves host EIF5B, contributing to host translation shutoff. Also cleaves host PABPC1, contributing to host translation shutoff. Cleaves host NLRP1, triggers host N-glycine-mediated degradation of the autoinhibitory NLRP1 N-terminal fragment. The polypeptide is Genome polyprotein (Homo sapiens (Human)).